The following is a 129-amino-acid chain: NADH-quinone oxidoreductase subunit A (129 aa).

Transmembrane regions (helical) follow at residues 9–29 (FPIG…LGLA), 68–88 (LLFI…VLLL), and 97–117 (LGWP…AGLV).

Belongs to the complex I subunit 3 family. NDH-1 is composed of 14 different subunits. Subunits NuoA, H, J, K, L, M, N constitute the membrane sector of the complex.

The protein resides in the cell inner membrane. The enzyme catalyses a quinone + NADH + 5 H(+)(in) = a quinol + NAD(+) + 4 H(+)(out). In terms of biological role, NDH-1 shuttles electrons from NADH, via FMN and iron-sulfur (Fe-S) centers, to quinones in the respiratory chain. The immediate electron acceptor for the enzyme in this species is believed to be ubiquinone. Couples the redox reaction to proton translocation (for every two electrons transferred, four hydrogen ions are translocated across the cytoplasmic membrane), and thus conserves the redox energy in a proton gradient. This chain is NADH-quinone oxidoreductase subunit A, found in Anaeromyxobacter dehalogenans (strain 2CP-C).